Here is a 420-residue protein sequence, read N- to C-terminus: Reticulon-4 receptor-like 2 (420 aa).

A signal peptide spans 1–30; sequence MLPGLRRLLQGPASACLLLTLLALPPVTPS. 2 cysteine pairs are disulfide-bonded: C31–C37 and C35–C46. One can recognise an LRRNT domain in the interval 31-60; sequence CPMLCTCYSSPPTVSCQANNFSSVPLSLPP. N50 carries N-linked (GlcNAc...) asparagine glycosylation. LRR repeat units lie at residues 61 to 82, 83 to 104, 107 to 129, 132 to 153, 156 to 177, 180 to 201, 204 to 225, and 228 to 249; these read STQR…TFGP, NLLT…TFRH, ALEE…TFQG, RLQS…IFRG, SLQY…LFAD, NLSH…VFRG, SLDR…AFHG, and RLTI…ALAD. N93 is a glycosylation site (N-linked (GlcNAc...) asparagine). Residue N236 is glycosylated (N-linked (GlcNAc...) asparagine). The LRRCT domain occupies 261 to 312; sequence NPWACDCRARPLWAWFQRARVSSSDVTCATPPERQGRDLRTLRDTDFQACPP. Cystine bridges form between C265–C288 and C267–C310. The interval 286–390 is disordered; the sequence is VTCATPPERQ…GEQTCPGAAC (105 aa). The span at 294–306 shows a compositional bias: basic and acidic residues; it reads RQGRDLRTLRDTD. The important for interaction with MAG stretch occupies residues 315 to 327; it reads PTRPGSRARGNSS. Residues 351 to 360 show a composition bias toward basic and acidic residues; sequence LPAEDSRGRQ. Residue C390 is the site of GPI-anchor amidated cysteine attachment. The propeptide at 391-420 is removed in mature form; sequence QAPADSRGPVLSAGLRTPLLCLLLLAPHHL.

This sequence belongs to the Nogo receptor family. As to quaternary structure, interaction with MAG is controversial, and may be indirect. Interacts with MAG. Does not interact with OMG and RTN4. In terms of processing, undergoes zinc metalloproteinase-mediated ectodomain shedding in neuroblastoma cells; is released both as a full-length ectodomain and an N-terminal fragment containing the leucine-rich repeat (LRR) region of the protein. Post-translationally, N-glycosylated. O-glycosylated. Contains terminal sialic acid groups on its glycan chains. As to expression, detected in adult brain, in neocortex, hippocampus, striatum and dorsal root ganglion neurons, and in retina (at protein level). In brain, detected in cerebral cortex and hippocampus. Weak or no expression detected in the cerebellum, thalamus or striatum.

It is found in the cell membrane. The protein localises to the cell projection. Its subcellular location is the dendrite. It localises to the perikaryon. The protein resides in the axon. It is found in the membrane raft. Cell surface receptor that plays a functionally redundant role in the inhibition of neurite outgrowth mediated by MAG. Plays a functionally redundant role in postnatal brain development. Contributes to normal axon migration across the brain midline and normal formation of the corpus callosum. Does not seem to play a significant role in regulating axon regeneration in the adult central nervous system. Protects motoneurons against apoptosis; protection against apoptosis is probably mediated by MAG. Like other family members, plays a role in restricting the number dendritic spines and the number of synapses that are formed during brain development. Signaling mediates activation of Rho and downstream reorganization of the actin cytoskeleton. The chain is Reticulon-4 receptor-like 2 from Rattus norvegicus (Rat).